A 494-amino-acid chain; its full sequence is Glutamate--tRNA ligase (494 aa).

The 'HIGH' region signature appears at 15–25 (PSPTGNPHVGL). Positions 112, 114, 139, and 141 each coordinate Zn(2+). Positions 260–264 (KLSKR) match the 'KMSKS' region motif. K263 serves as a coordination point for ATP.

This sequence belongs to the class-I aminoacyl-tRNA synthetase family. Glutamate--tRNA ligase type 1 subfamily. As to quaternary structure, monomer. It depends on Zn(2+) as a cofactor.

Its subcellular location is the cytoplasm. It catalyses the reaction tRNA(Glu) + L-glutamate + ATP = L-glutamyl-tRNA(Glu) + AMP + diphosphate. Catalyzes the attachment of glutamate to tRNA(Glu) in a two-step reaction: glutamate is first activated by ATP to form Glu-AMP and then transferred to the acceptor end of tRNA(Glu). This Streptomyces coelicolor (strain ATCC BAA-471 / A3(2) / M145) protein is Glutamate--tRNA ligase.